The sequence spans 102 residues: Small ribosomal subunit protein uS10 (102 aa).

Belongs to the universal ribosomal protein uS10 family. As to quaternary structure, part of the 30S ribosomal subunit.

Functionally, involved in the binding of tRNA to the ribosomes. The sequence is that of Small ribosomal subunit protein uS10 from Bacillus cereus (strain G9842).